A 395-amino-acid polypeptide reads, in one-letter code: S-adenosylmethionine synthase 5 (395 aa).

A Mg(2+)-binding site is contributed by glutamate 10. Histidine 16 provides a ligand contact to ATP. Glutamate 44 is a K(+) binding site. Positions 57 and 100 each coordinate L-methionine. Residues 168–170 (DGK), 236–239 (SGRF), aspartate 247, 253–254 (RK), alanine 270, lysine 274, and lysine 278 each bind ATP. Aspartate 247 is a binding site for L-methionine. Residue lysine 278 coordinates L-methionine.

Belongs to the AdoMet synthase family. Homotetramer. It depends on Mn(2+) as a cofactor. Mg(2+) serves as cofactor. The cofactor is Co(2+). K(+) is required as a cofactor.

The protein localises to the cytoplasm. The catalysed reaction is L-methionine + ATP + H2O = S-adenosyl-L-methionine + phosphate + diphosphate. Its pathway is amino-acid biosynthesis; S-adenosyl-L-methionine biosynthesis; S-adenosyl-L-methionine from L-methionine: step 1/1. In terms of biological role, catalyzes the formation of S-adenosylmethionine from methionine and ATP. The reaction comprises two steps that are both catalyzed by the same enzyme: formation of S-adenosylmethionine (AdoMet) and triphosphate, and subsequent hydrolysis of the triphosphate. This is S-adenosylmethionine synthase 5 (METK5) from Populus trichocarpa (Western balsam poplar).